The primary structure comprises 555 residues: Poly(A) polymerase PAPa (555 aa).

The interval 1-20 (MNNQAYGVTPPISVANSTPK) is disordered. ATP is bound by residues 86–88 (FGS), 99–101 (DID), D153, K214, Y223, and 232–233 (GV). Residues D99, D101, and D153 each coordinate Mg(2+). The disordered stretch occupies residues 532 to 555 (KRKRAVSKNEGKKKPKSVGTVSAA).

The protein belongs to the poly(A) polymerase family. It depends on Mg(2+) as a cofactor. The cofactor is Mn(2+).

The protein localises to the nucleus. The enzyme catalyses RNA(n) + ATP = RNA(n)-3'-adenine ribonucleotide + diphosphate. In terms of biological role, polymerase that creates the 3'-poly(A) tail of mRNA's. May acquire specificity through interaction with a cleavage and polyadenylation factor. The sequence is that of Poly(A) polymerase PAPa (PAPA) from Candida albicans (strain SC5314 / ATCC MYA-2876) (Yeast).